Reading from the N-terminus, the 526-residue chain is Protein DETOXIFICATION 43 (526 aa).

Residues 1–36 (MTETGDDLATVKKPIPFLVIFKDLRHVFSRDTTGRE) are Cytoplasmic-facing. The helical transmembrane segment at 37–57 (ILGIAFPAALALAADPIASLI) threads the bilayer. Over 58 to 59 (DT) the chain is Extracellular. The chain crosses the membrane as a helical span at residues 60–80 (AFVGRLGAVQLAAVGVSIAIF). Over 81–170 (NQASRITIFP…NKKEKRTIRT (90 aa)) the chain is Cytoplasmic. Positions 133–166 (ISSPTSNDTNQPQQPPAPDTKSNSGNKSNKKEKR) are disordered. The segment covering 134-144 (SSPTSNDTNQP) has biased composition (polar residues). The helical transmembrane segment at 171 to 191 (ASTAMILGLILGLVQAIFLIF) threads the bilayer. The Extracellular portion of the chain corresponds to 192–215 (SSKLLLGVMGVKPNSPMLSPAHKY). The helical transmembrane segment at 216–236 (LSIRALGAPALLLSLAMQGIF) threads the bilayer. Residues 237 to 244 (RGFKDTKT) lie on the Cytoplasmic side of the membrane. Residues 245–267 (PLFATVVADVINIVLDPIFIFVL) form a helical membrane-spanning segment. Over 268–270 (RLG) the chain is Extracellular. Residues 271–293 (IIGAAIAHVISQYFMTLILFVFL) form a helical membrane-spanning segment. Over 294-316 (AKKVNLIPPNFGDLQFGRFLKNG) the chain is Cytoplasmic. A helical transmembrane segment spans residues 317–337 (LLLLARTIAVTFCQTLAAAMA). Residues 338 to 353 (ARLGTTPMAAFQICLQ) are Extracellular-facing. Residues 354 to 374 (VWLTSSLLNDGLAVAGQAILA) form a helical membrane-spanning segment. Residues 375-396 (CSFAEKDYNKVTAVASRVLQMG) are Cytoplasmic-facing. Residues 397 to 417 (FVLGLGLSVFVGLGLYFGAGV) traverse the membrane as a helical segment. The Extracellular portion of the chain corresponds to 418-426 (FSKDPAVIH). Residues 427-447 (LMAIGIPFIAATQPINSLAFV) traverse the membrane as a helical segment. Topologically, residues 448-457 (LDGVNFGASD) are cytoplasmic. Residues 458-478 (FAYTAYSMVGVAAISIAAVIY) form a helical membrane-spanning segment. Over 479 to 484 (MAKTNG) the chain is Extracellular. A helical membrane pass occupies residues 485-505 (FIGIWIALTIYMALRAITGIA). Residues 506–526 (RMATGTGPWRFLRGRSSSSSS) are Cytoplasmic-facing.

This sequence belongs to the multi antimicrobial extrusion (MATE) (TC 2.A.66.1) family. Expressed in roots in the pericycle and cells internal to the pericycle and surrounding the vascular tissue. Also expressed in seed and flower.

Its subcellular location is the cell membrane. Citrate transporter responsible for loading citrate into xylem tissues, which helps facilitate iron transport to shoots. Mediates the citrate release in the apoplastic spaces during plant development allowing iron nutrition between symplastically disconnected tissues. This Arabidopsis thaliana (Mouse-ear cress) protein is Protein DETOXIFICATION 43.